A 406-amino-acid chain; its full sequence is Zinc finger CCCH domain-containing protein 15 homolog (406 aa).

Over residues 1–11 the composition is skewed to low complexity; the sequence is MPPKKAPAGPS. Positions 1-70 are disordered; it reads MPPKKAPAGP…DKKKDEKEKK (70 aa). The span at 12–28 shows a compositional bias: basic and acidic residues; sequence KKTEQKKKEKVIEDKTF. The span at 38 to 50 shows a compositional bias: low complexity; sequence QQKFIQQVQKQVQ. Residues 56–70 are compositionally biased toward basic and acidic residues; sequence PRQDGDKKKDEKEKK. The stretch at 57–82 forms a coiled coil; the sequence is RQDGDKKKDEKEKKLADLREMASIFK. 2 C3H1-type zinc fingers span residues 94 to 121 and 166 to 203; these read DPKS…HDLS and PTTE…HALP. A disordered region spans residues 336–382; sequence VDGSGTIASSTRLLDQATEAAKTAAAEDGAASDDENPSSSAPANDAA. Low complexity-rich tracts occupy residues 352–364 and 372–382; these read ATEA…AEDG and PSSSAPANDAA.

Belongs to the ZC3H15/TMA46 family.

This Drosophila pseudoobscura pseudoobscura (Fruit fly) protein is Zinc finger CCCH domain-containing protein 15 homolog.